Consider the following 161-residue polypeptide: Disulfide bond formation protein B (161 aa).

Residues 1 to 8 (MQANSRAY) lie on the Cytoplasmic side of the membrane. A helical membrane pass occupies residues 9-25 (FLLIAFISFGLVGFALY). At 26–43 (LQFEKGYQPCPLCIMQRF) the chain is on the periplasmic side. Cys35 and Cys38 are joined by a disulfide. Residues 44–58 (AFIGIGLFSLLAVIA) traverse the membrane as a helical segment. At 59-63 (QNTRS) the chain is on the cytoplasmic side. A helical transmembrane segment spans residues 64–81 (LWQGLGMLSGVGGIAVAV). The Periplasmic segment spans residues 82 to 136 (YHVSLLLNPKASCGIDPLENWVNALPTAKVLPQVFYSDGLCTAPLPPVLGLSVPA). The cysteines at positions 94 and 122 are disulfide-linked. Residues 137–155 (WSLIWLFILTLTLAVGLIR) form a helical membrane-spanning segment. Over 156–161 (REKNFR) the chain is Cytoplasmic.

The protein belongs to the DsbB family.

It is found in the cell inner membrane. Functionally, required for disulfide bond formation in some periplasmic proteins. Acts by oxidizing the DsbA protein. The sequence is that of Disulfide bond formation protein B from Cupriavidus pinatubonensis (strain JMP 134 / LMG 1197) (Cupriavidus necator (strain JMP 134)).